The primary structure comprises 255 residues: Flagellar L-ring protein (255 aa).

Residues 1–25 form the signal peptide; the sequence is MRRHSTRKTVARVAVVALAVGVLAG. C26 carries the N-palmitoyl cysteine lipid modification. C26 carries S-diacylglycerol cysteine lipidation.

Belongs to the FlgH family. In terms of assembly, the basal body constitutes a major portion of the flagellar organelle and consists of four rings (L,P,S, and M) mounted on a central rod.

The protein localises to the cell outer membrane. Its subcellular location is the bacterial flagellum basal body. Functionally, assembles around the rod to form the L-ring and probably protects the motor/basal body from shearing forces during rotation. The sequence is that of Flagellar L-ring protein from Rhodospirillum rubrum (strain ATCC 11170 / ATH 1.1.1 / DSM 467 / LMG 4362 / NCIMB 8255 / S1).